The following is a 128-amino-acid chain: S-adenosylmethionine decarboxylase proenzyme (128 aa).

Serine 61 acts as the Schiff-base intermediate with substrate; via pyruvic acid in catalysis. Position 61 is a pyruvic acid (Ser); by autocatalysis (serine 61). The active-site Proton acceptor; for processing activity is histidine 66. The active-site Proton donor; for catalytic activity is the cysteine 81.

Belongs to the prokaryotic AdoMetDC family. Type 1 subfamily. In terms of assembly, heterotetramer of two alpha and two beta chains arranged as a dimer of alpha/beta heterodimers. Requires pyruvate as cofactor. Is synthesized initially as an inactive proenzyme. Formation of the active enzyme involves a self-maturation process in which the active site pyruvoyl group is generated from an internal serine residue via an autocatalytic post-translational modification. Two non-identical subunits are generated from the proenzyme in this reaction, and the pyruvate is formed at the N-terminus of the alpha chain, which is derived from the carboxyl end of the proenzyme. The post-translation cleavage follows an unusual pathway, termed non-hydrolytic serinolysis, in which the side chain hydroxyl group of the serine supplies its oxygen atom to form the C-terminus of the beta chain, while the remainder of the serine residue undergoes an oxidative deamination to produce ammonia and the pyruvoyl group blocking the N-terminus of the alpha chain.

It catalyses the reaction S-adenosyl-L-methionine + H(+) = S-adenosyl 3-(methylsulfanyl)propylamine + CO2. It participates in amine and polyamine biosynthesis; S-adenosylmethioninamine biosynthesis; S-adenosylmethioninamine from S-adenosyl-L-methionine: step 1/1. Catalyzes the decarboxylation of S-adenosylmethionine to S-adenosylmethioninamine (dcAdoMet), the propylamine donor required for the synthesis of the polyamines spermine and spermidine from the diamine putrescine. In Parasynechococcus marenigrum (strain WH8102), this protein is S-adenosylmethionine decarboxylase proenzyme.